Consider the following 612-residue polypeptide: Peroxisomal carnitine O-octanoyltransferase (612 aa).

At Met1 the chain carries N-acetylmethionine. Residues Lys40 and Lys57 each carry the N6-succinyllysine modification. The active-site Proton acceptor is the His327. CoA is bound by residues Lys406 and 410 to 417; that span reads KEEALHPD. The residue at position 406 (Lys406) is an N6-acetyllysine; alternate. Lys406 is modified (N6-succinyllysine; alternate). (R)-carnitine contacts are provided by Tyr439, Thr441, and Thr452. Residues 610-612 carry the Microbody targeting signal motif; the sequence is AHL.

Belongs to the carnitine/choline acetyltransferase family.

It is found in the peroxisome. It catalyses the reaction octanoyl-CoA + (R)-carnitine = O-octanoyl-(R)-carnitine + CoA. It carries out the reaction 4,8-dimethylnonanoyl-CoA + (R)-carnitine = O-4,8-dimethylnonanoyl-(R)-carnitine + CoA. The protein operates within lipid metabolism; fatty acid beta-oxidation. Its function is as follows. Beta-oxidation of fatty acids. The highest activity concerns the C6 to C10 chain length substrate. The polypeptide is Peroxisomal carnitine O-octanoyltransferase (Crot) (Mus musculus (Mouse)).